Consider the following 151-residue polypeptide: Homeobox protein HD-1 (151 aa).

The homeobox DNA-binding region spans 87-146; it reads ESIKSRRFPKFITEALERSFEIDQYPSEAEKARLAKICKLSTKQINNWFTNKRNRTKGHE.

Its subcellular location is the nucleus. The polypeptide is Homeobox protein HD-1 (HD-1) (Encephalitozoon cuniculi (strain GB-M1) (Microsporidian parasite)).